The sequence spans 309 residues: 4-diphosphocytidyl-2-C-methyl-D-erythritol kinase (309 aa).

The active site involves Lys11. Residue 94–104 participates in ATP binding; sequence PVAAGLAGGSA. Asp136 is an active-site residue.

This sequence belongs to the GHMP kinase family. IspE subfamily.

It catalyses the reaction 4-CDP-2-C-methyl-D-erythritol + ATP = 4-CDP-2-C-methyl-D-erythritol 2-phosphate + ADP + H(+). It participates in isoprenoid biosynthesis; isopentenyl diphosphate biosynthesis via DXP pathway; isopentenyl diphosphate from 1-deoxy-D-xylulose 5-phosphate: step 3/6. In terms of biological role, catalyzes the phosphorylation of the position 2 hydroxy group of 4-diphosphocytidyl-2C-methyl-D-erythritol. The polypeptide is 4-diphosphocytidyl-2-C-methyl-D-erythritol kinase (Synechococcus sp. (strain JA-3-3Ab) (Cyanobacteria bacterium Yellowstone A-Prime)).